Reading from the N-terminus, the 470-residue chain is Nuclear segregation protein BFR1 (470 aa).

Coiled coils occupy residues 17 to 178 and 237 to 281; these read DKKL…NGLN and NEFK…THAK. Residue Ser-260 is modified to Phosphoserine. Phosphothreonine is present on Thr-336. The interval 346–368 is disordered; it reads APSKSKKYKKKNQQKNTENEQPA. Residues 349 to 358 are compositionally biased toward basic residues; sequence KSKKYKKKNQ. A Phosphoserine modification is found at Ser-369. The stretch at 398-469 forms a coiled coil; sequence NSDDVKITVE…EQEESEKDKE (72 aa). The segment at 447 to 470 is disordered; the sequence is QQVKKELEEKRLKEQEESEKDKEN.

Its function is as follows. Implicated in secretion, nuclear segregation and in maintenance of cell size. The polypeptide is Nuclear segregation protein BFR1 (BFR1) (Saccharomyces cerevisiae (strain ATCC 204508 / S288c) (Baker's yeast)).